Reading from the N-terminus, the 598-residue chain is Nicotinamide riboside transporter 1 (598 aa).

11 helical membrane-spanning segments follow: residues 48–68, 71–91, 112–132, 174–194, 197–217, 241–261, 273–293, 372–392, 395–415, 447–467, and 484–504; these read LAYWGAVSFTAGTWMSGSAAL, GLSYPETIVSFLLGNVLTIIF, FVFGIYGSAFGIIIRILMSIV, LVGFIIFHVLTALCYFMKPYH, YLLIWSCVATCFAMLGIVIYL, AWAWVYMISYWFGSISPGSTN, LAIWTGSVCALLIPATLVPIF, GALFCACISWACLPWNFYNSS, FLTVMSSFGVVMTPIIAVMIC, AIVAWVCGMAPGLPGIAWEVN, and SFFSFLISFFVYWGLCVFFPF. Phosphoserine is present on residues S560 and S572.

It belongs to the purine-cytosine permease (2.A.39) family.

The protein localises to the cell membrane. In terms of biological role, high-affinity pH-dependent nicotinamide riboside transporter which also transports thiamine with low affinity. Involved in 5-fluorocytosine sensitivity. The sequence is that of Nicotinamide riboside transporter 1 (NRT1) from Saccharomyces cerevisiae (strain ATCC 204508 / S288c) (Baker's yeast).